We begin with the raw amino-acid sequence, 337 residues long: uncharacterized protein (337 aa).

Residues 42-66 (SHSVSPSPSPSDFSSSSSSSSSSPS) are compositionally biased toward low complexity. The interval 42–68 (SHSVSPSPSPSDFSSSSSSSSSSPSTF) is disordered. The region spanning 129–304 (FLVIDLEGKV…DDTKNITRVV (176 aa)) is the Exonuclease domain. The Mg(2+) site is built by Asp-133, Glu-135, and Asp-234. The Proton acceptor role is filled by Glu-135. Residue Glu-135 participates in AMP binding. Catalysis depends on His-291, which acts as the Proton acceptor. His-291 contacts AMP. Residue Asp-296 coordinates Mg(2+).

This is an uncharacterized protein from Arabidopsis thaliana (Mouse-ear cress).